Here is a 427-residue protein sequence, read N- to C-terminus: tRNA(Ile)-lysidine synthase (427 aa).

An ATP-binding site is contributed by 29 to 34 (SGGVDS).

Belongs to the tRNA(Ile)-lysidine synthase family.

The protein localises to the cytoplasm. It carries out the reaction cytidine(34) in tRNA(Ile2) + L-lysine + ATP = lysidine(34) in tRNA(Ile2) + AMP + diphosphate + H(+). In terms of biological role, ligates lysine onto the cytidine present at position 34 of the AUA codon-specific tRNA(Ile) that contains the anticodon CAU, in an ATP-dependent manner. Cytidine is converted to lysidine, thus changing the amino acid specificity of the tRNA from methionine to isoleucine. This is tRNA(Ile)-lysidine synthase from Thermosipho africanus (strain TCF52B).